The chain runs to 424 residues: Enolase (424 aa).

Gln162 lines the (2R)-2-phosphoglycerate pocket. Glu204 (proton donor) is an active-site residue. Positions 241, 284, and 311 each coordinate Mg(2+). Lys336, Arg365, Ser366, and Lys387 together coordinate (2R)-2-phosphoglycerate. The active-site Proton acceptor is the Lys336.

The protein belongs to the enolase family. The cofactor is Mg(2+).

The protein localises to the cytoplasm. The protein resides in the secreted. Its subcellular location is the cell surface. It catalyses the reaction (2R)-2-phosphoglycerate = phosphoenolpyruvate + H2O. Its pathway is carbohydrate degradation; glycolysis; pyruvate from D-glyceraldehyde 3-phosphate: step 4/5. Functionally, catalyzes the reversible conversion of 2-phosphoglycerate (2-PG) into phosphoenolpyruvate (PEP). It is essential for the degradation of carbohydrates via glycolysis. The protein is Enolase of Sinorhizobium medicae (strain WSM419) (Ensifer medicae).